The sequence spans 439 residues: Trigger factor (439 aa).

Residues 163–248 (GDIAVIDFEG…LNQIKERVLP (86 aa)) form the PPIase FKBP-type domain.

The protein belongs to the FKBP-type PPIase family. Tig subfamily.

It localises to the cytoplasm. It catalyses the reaction [protein]-peptidylproline (omega=180) = [protein]-peptidylproline (omega=0). Functionally, involved in protein export. Acts as a chaperone by maintaining the newly synthesized protein in an open conformation. Functions as a peptidyl-prolyl cis-trans isomerase. This Syntrophotalea carbinolica (strain DSM 2380 / NBRC 103641 / GraBd1) (Pelobacter carbinolicus) protein is Trigger factor.